The sequence spans 427 residues: 3-phosphoshikimate 1-carboxyvinyltransferase (427 aa).

Lys-20 lines the phosphoenolpyruvate pocket. 3-phosphoshikimate contacts are provided by Ser-21 and Arg-25. Phosphoenolpyruvate is bound by residues Gly-92 and Arg-120. Residues Ser-166, Ala-167, Gln-168, Asp-312, and Lys-339 each coordinate 3-phosphoshikimate. Residue Gln-168 participates in phosphoenolpyruvate binding. Asp-312 functions as the Proton acceptor in the catalytic mechanism. Phosphoenolpyruvate-binding residues include Arg-343 and Arg-385.

Homotetramer.

The protein localises to the cytoplasm. It catalyses the reaction 3-phosphoshikimate + phosphoenolpyruvate = 5-O-(1-carboxyvinyl)-3-phosphoshikimate + phosphate. It functions in the pathway metabolic intermediate biosynthesis; chorismate biosynthesis; chorismate from D-erythrose 4-phosphate and phosphoenolpyruvate: step 6/7. Its activity is regulated as follows. Competitively inhibited by glyphosate. Activated by ammonium, rubidium or potassium ions. Functionally, catalyzes the transfer of the enolpyruvyl moiety of phosphoenolpyruvate (PEP) to the 5-hydroxyl of shikimate-3-phosphate (S3P) to produce enolpyruvyl shikimate-3-phosphate and inorganic phosphate. The polypeptide is 3-phosphoshikimate 1-carboxyvinyltransferase (Streptococcus pneumoniae serotype 4 (strain ATCC BAA-334 / TIGR4)).